The chain runs to 492 residues: MALGFLVYLSYTPRIKGNIPAFTPETYPIIGSYKFFTHKLSFWKAAQRASKNGMFSFWLGKNHVVGVSGEAARKMYLENPAMDHIKGVILIGHGPDYIDGRKTKQHGIWLPVMAGNKSYAQKNVLNCQKTAELTKRLPKVTNDVRKAFESVASQGFIINPARMCAVLTWDTATRVFAADELIDVPENRAKLLYYLPILQKTSSCHLLSFPWASYFSLPYWKRKYGREGMRRLVTPIVEARMRIIDPVRADDPLQTFVDNGDSADYMINFLISMIFISAANGCVVSGAMLYSIAHHPELQEKIYQEIKAAANQYAADSSAPLVDQLDSLPVKAWENMSETIDLCYKECIRMWVAFPMGRMNEGTTDIKIPGTDEVVPAGGLCCYNTIDVHYSEKLYPEPLKWDPARFGEGRKEMEQEAHGFMGWGAGRHPCNGIRWAKIQQNMMLAYAFAMYKWTGCHKDGSPNTDFIPPTTALNELAPSLPQNLFLKAEPRK.

The N-linked (GlcNAc...) asparagine glycan is linked to Asn116. A helical transmembrane segment spans residues 269-293 (FLISMIFISAANGCVVSGAMLYSIA). Asn335 carries N-linked (GlcNAc...) asparagine glycosylation. Cys430 contributes to the heme binding site.

Belongs to the cytochrome P450 family. The cofactor is heme.

It is found in the membrane. It participates in secondary metabolite biosynthesis. Functionally, cytochrome P450 monooxygenase; part of the gene cluster that mediates the biosynthesis of an emodin derivative that may be involved in black Sigatoka disease of banana. The pathway begins with the synthesis of atrochrysone thioester by the polyketide synthase PKS8-1. The atrochrysone carboxyl ACP thioesterase MYCFIDRAFT_190111 then breaks the thioester bond and releases the atrochrysone carboxylic acid from PKS8-1. The decarboxylase MYCFIDRAFT_34057 then catalyzes the concerted decarboxylation-elimination required to convert atochrysone carboxylic acid into emodin anthrone, which is further oxidized to emodin by the anthrone oxygenase MYCFIDRAFT_34418. The functions of the other tailoring enzymes as well as the final product of the cluster have still to be identified. The polypeptide is Cytochrome P450 monooxygenase MYCFIDRAFT_204672 (Pseudocercospora fijiensis (strain CIRAD86) (Black leaf streak disease fungus)).